Consider the following 463-residue polypeptide: Regulator of microtubule dynamics protein 3 (463 aa).

Topologically, residues 1-4 (MSKL) are mitochondrial intermembrane. Residues 5 to 27 (ILSYRIGLGLVVGAAAGAVIYIV) traverse the membrane as a helical segment. Over 28–463 (FRRNRKKTRK…PATAEEELLV (436 aa)) the chain is Cytoplasmic. The FFAT signature appears at 146 to 161 (IYFTATSGAAHTDAES). Residues 153–192 (GAAHTDAESEGGYSTAYAESDFERESSRASEAEEEDEVSC) form a disordered region. Over residues 173-183 (DFERESSRASE) the composition is skewed to basic and acidic residues. Residues 279–302 (AEDAQEKKSFASEGKEEAEAALQK) are a coiled coil.

The protein belongs to the RMDN family. As to quaternary structure, interacts with PTPN2. Interacts with microtubules. Interacts with VAPB. Interacts (FFAT motif) with MOSPD2 (via MSP domain).

Its subcellular location is the mitochondrion outer membrane. The protein localises to the cytoplasm. It localises to the nucleus. The protein resides in the cytoskeleton. It is found in the spindle. Its subcellular location is the spindle pole. Involved in cellular calcium homeostasis regulation. This Xenopus laevis (African clawed frog) protein is Regulator of microtubule dynamics protein 3 (rmdn3).